The primary structure comprises 395 residues: Major outer membrane protein P.IA (395 aa).

A signal peptide spans 1 to 19; the sequence is MRKKLTALVLSALPLAAVA.

Belongs to the Gram-negative porin family. Homotrimer.

The protein localises to the cell outer membrane. Functionally, serves as a slightly cation selective porin. Major antigen on the gonococcal cell surface and it may have pathogenic properties in addition to its porin activity. This is Major outer membrane protein P.IA (porA) from Neisseria meningitidis serogroup A / serotype 4A (strain DSM 15465 / Z2491).